A 276-amino-acid polypeptide reads, in one-letter code: Kallikrein-10 (276 aa).

A signal peptide spans 1–30 (MRAPHLHLSAASGARALAKLLPLLMAQLWA). The N-linked (GlcNAc...) asparagine glycan is linked to Asn39. The region spanning 47–274 (AYGSPCARGS…YMSWINKVIR (228 aa)) is the Peptidase S1 domain. 5 disulfides stabilise this stretch: Cys52–Cys162, Cys71–Cys87, Cys169–Cys235, Cys201–Cys215, and Cys225–Cys250. Catalysis depends on charge relay system residues His86 and Asp137. Residue Ser229 is the Charge relay system of the active site.

Belongs to the peptidase S1 family. Kallikrein subfamily. As to expression, expressed in breast, ovary and prostate.

The protein resides in the secreted. Functionally, has a tumor-suppressor role for NES1 in breast and prostate cancer. The sequence is that of Kallikrein-10 (KLK10) from Homo sapiens (Human).